The chain runs to 345 residues: MNKKKRVLTGDRPTGKLHLGHWVGSIKNRLDLQNNPAYDCFFIIADLHTLTTRVRKEQVVDVDNHIYEVLADWLSVGIDPNKSSIYLQSAIPEIYELHLLFSMLISVNRIMGIPSLKEMAKNASIEEGGLSLGLMGYPVLQSADILLAKAQLVPVGKDNEAHIELTRDIARNFNRLYGEIFPEPETLQGELTSLVGIDGQGKMSKSANNAIYLSDDDATIEDKVRRMYTDPNRIHASTPGRVEGNPLFIYHDIFNPNKEEVEEFKTRYRQGCIKDVEIKTRLAEELIRFLQPFREKRAELLAHPKILQEALQKGTENMCALAKETMEEVHNTLELSRKWRSRLSL.

Residues 12 to 14 (RPT) and 20 to 21 (GH) contribute to the ATP site. Residues 13 to 21 (PTGKLHLGH) carry the 'HIGH' region motif. Residue aspartate 144 coordinates L-tryptophan. ATP-binding positions include 156–158 (GKD), leucine 194, and 202–206 (KMSKS). The 'KMSKS' region signature appears at 202–206 (KMSKS).

The protein belongs to the class-I aminoacyl-tRNA synthetase family. As to quaternary structure, homodimer.

It is found in the cytoplasm. The catalysed reaction is tRNA(Trp) + L-tryptophan + ATP = L-tryptophyl-tRNA(Trp) + AMP + diphosphate + H(+). Catalyzes the attachment of tryptophan to tRNA(Trp). This is Tryptophan--tRNA ligase from Chlamydia caviae (strain ATCC VR-813 / DSM 19441 / 03DC25 / GPIC) (Chlamydophila caviae).